A 157-amino-acid polypeptide reads, in one-letter code: 2-amino-4-hydroxy-6-hydroxymethyldihydropteridine pyrophosphokinase (157 aa).

Belongs to the HPPK family.

It carries out the reaction 6-hydroxymethyl-7,8-dihydropterin + ATP = (7,8-dihydropterin-6-yl)methyl diphosphate + AMP + H(+). Its pathway is cofactor biosynthesis; tetrahydrofolate biosynthesis; 2-amino-4-hydroxy-6-hydroxymethyl-7,8-dihydropteridine diphosphate from 7,8-dihydroneopterin triphosphate: step 4/4. Functionally, catalyzes the transfer of pyrophosphate from adenosine triphosphate (ATP) to 6-hydroxymethyl-7,8-dihydropterin, an enzymatic step in folate biosynthesis pathway. In Campylobacter jejuni subsp. jejuni serotype O:2 (strain ATCC 700819 / NCTC 11168), this protein is 2-amino-4-hydroxy-6-hydroxymethyldihydropteridine pyrophosphokinase (folK).